Here is a 662-residue protein sequence, read N- to C-terminus: Glycogen debranching enzyme (662 aa).

The Nucleophile role is filled by Asp338. Residue Glu373 is the Proton donor of the active site.

This sequence belongs to the glycosyl hydrolase 13 family.

It catalyses the reaction Hydrolysis of (1-&gt;6)-alpha-D-glucosidic linkages to branches with degrees of polymerization of three or four glucose residues in limit dextrin.. It functions in the pathway glycan degradation; glycogen degradation. In terms of biological role, removes maltotriose and maltotetraose chains that are attached by 1,6-alpha-linkage to the limit dextrin main chain, generating a debranched limit dextrin. This is Glycogen debranching enzyme from Yersinia pestis bv. Antiqua (strain Angola).